We begin with the raw amino-acid sequence, 395 residues long: PCI domain-containing protein 2 homolog (395 aa).

Positions 208 to 389 (ITYKYFVGRR…NKLVVSKQNP (182 aa)) constitute a PCI domain.

The protein belongs to the CSN12 family. As to quaternary structure, component of the nuclear pore complex (NPC)-associated TREX-2/AMEX complex (anchoring and mRNA export complex), composed of e(y)2, xmas and PCID2. Interaction between the TREX-2/AMEX complex and the ORC complex is required for ORC localization to mRNPs, and consequently mRNA export. Within the TREX-2/AMEX-ORC complex, interacts with Orc3 and Orc4. Interacts with sbr/NXF1. Interacts with Moe. Interacts with nudC; required to maintain stability in the cytoplasm. Post-translationally, mono- and poly-ubiquitinated.

Its subcellular location is the nucleus. The protein localises to the cytoplasm. It localises to the nucleus membrane. It is found in the cytoskeleton. Functionally, required for the export of nuclear mRNAs and involved in mRNA trafficking in the cytoplasm. Component of the nuclear pore complex (NPC)-associated TREX-2/AMEX complex (anchoring and mRNA export complex) which functions in docking export-competent ribonucleoprotein particles (mRNPs) to the nuclear entrance of the nuclear pore complex (nuclear basket), thereby enabling the export of mRNAs to the cytoplasm through the nuclear pores. Within the complex, specifically promotes the association of factors involved in regulating nuclear mRNA export, such as Moe, sbr/NXF1 and the ORC complex, to the mRNPs particles. In the cytoplasm, functions independently of its role in the TREX-2/AMEX complex, to promote cytoplasmic mRNA trafficking together with nudC. Associates with translationally active polysomes. The polypeptide is PCI domain-containing protein 2 homolog (Drosophila melanogaster (Fruit fly)).